The following is a 480-amino-acid chain: Zinc metalloproteinase/disintegrin (480 aa).

The first 20 residues, 1 to 20 (MIQVLLITICLAVFPFQGSS), serve as a signal peptide directing secretion. The propeptide occupies 21 to 190 (IVLDSGNLNE…KASQLNVSPD (170 aa)). Residues 197–391 (RFIKLAIYVD…HSPQCILNDP (195 aa)) enclose the Peptidase M12B domain. N-linked (GlcNAc...) asparagine glycans are attached at residues asparagine 259 and asparagine 279. Cystine bridges form between cysteine 308-cysteine 386, cysteine 348-cysteine 370, cysteine 350-cysteine 353, cysteine 413-cysteine 428, cysteine 415-cysteine 423, cysteine 422-cysteine 445, cysteine 436-cysteine 442, cysteine 441-cysteine 466, and cysteine 454-cysteine 473. Histidine 333 serves as a coordination point for Zn(2+). Glutamate 334 is an active-site residue. Residues histidine 337 and histidine 343 each contribute to the Zn(2+) site. Residues 399–480 (TPVSGNELLE…AGCPRNPFHA (82 aa)) enclose the Disintegrin domain. Positions 458–460 (RGD) match the Cell attachment site motif.

Belongs to the venom metalloproteinase (M12B) family. P-II subfamily. P-IIa sub-subfamily. In terms of assembly, monomer. It depends on Zn(2+) as a cofactor. As to expression, expressed by the venom gland.

The protein localises to the secreted. In terms of biological role, impairs hemostasis in the envenomed animal. Functionally, inhibits platelet aggregation and bone resorption. This is Zinc metalloproteinase/disintegrin from Gloydius halys (Chinese water mocassin).